We begin with the raw amino-acid sequence, 251 residues long: Uridylate kinase (251 aa).

24–27 (KISG) serves as a coordination point for ATP. The tract at residues 32–37 (GDQGFG) is involved in allosteric activation by GTP. Position 66 (G66) interacts with UMP. 2 residues coordinate ATP: G67 and R71. UMP contacts are provided by residues D86 and 147 to 154 (TGNPYFTT). Positions 175, 181, and 184 each coordinate ATP.

The protein belongs to the UMP kinase family. Homohexamer.

The protein localises to the cytoplasm. The catalysed reaction is UMP + ATP = UDP + ADP. It functions in the pathway pyrimidine metabolism; CTP biosynthesis via de novo pathway; UDP from UMP (UMPK route): step 1/1. Allosterically activated by GTP. Inhibited by UTP. In terms of biological role, catalyzes the reversible phosphorylation of UMP to UDP. This chain is Uridylate kinase, found in Ruegeria pomeroyi (strain ATCC 700808 / DSM 15171 / DSS-3) (Silicibacter pomeroyi).